A 214-amino-acid chain; its full sequence is Ras-like protein 2 (214 aa).

GTP is bound by residues 19 to 24 (GVGKSC), 35 to 41 (VDEYDPT), 65 to 66 (AG), 122 to 125 (NKCD), and 152 to 154 (SAK). Residues 38 to 46 (YDPTIEDSY) carry the Effector region motif. Residues 178-197 (QGYSTGSGGSNAGGPSNKME) are disordered. Cysteine 211 bears the Cysteine methyl ester mark. Cysteine 211 carries the S-farnesyl cysteine lipid modification. Positions 212–214 (VLM) are cleaved as a propeptide — removed in mature form.

This sequence belongs to the small GTPase superfamily. Ras family. Interacts with farnesyltransferase beta subunit RAM1.

It is found in the cell membrane. With respect to regulation, alternates between an inactive form bound to GDP and an active form bound to GTP. Activated by a guanine nucleotide-exchange factor (GEF) and inactivated by a GTPase-activating protein (GAP). Modulates the activity of the adenylate cyclase catalytic subunit and therefore affects the biosynthesis of cyclic-AMP. Plays a role in both surface attachment and surface recognition of appressoria, a highly specialized infection structure for plant penetration. Regulates appressorium formation by coordinated regulation of cAMP signaling and Pmk1 MAPK pathways. The polypeptide is Ras-like protein 2 (Pyricularia oryzae (strain 70-15 / ATCC MYA-4617 / FGSC 8958) (Rice blast fungus)).